The chain runs to 533 residues: UDP-glucuronosyltransferase 1-2 (533 aa).

Residues 1 to 27 form the signal peptide; it reads MDTGLCVPLRGISGLLLLLCALPWAEG. Residues N141, N295, and N433 are each glycosylated (N-linked (GlcNAc...) asparagine). The chain crosses the membrane as a helical span at residues 491-511; it reads VIGFLLAIVLTVVFIVFKCCA.

This sequence belongs to the UDP-glycosyltransferase family. Expressed in kidney.

The protein resides in the microsome. The protein localises to the endoplasmic reticulum membrane. The catalysed reaction is glucuronate acceptor + UDP-alpha-D-glucuronate = acceptor beta-D-glucuronoside + UDP + H(+). Its function is as follows. UDPGT is of major importance in the conjugation and subsequent elimination of potentially toxic xenobiotics and endogenous compounds. The sequence is that of UDP-glucuronosyltransferase 1-2 (Ugt1a2) from Mus musculus (Mouse).